The following is a 726-amino-acid chain: Catalase-peroxidase (726 aa).

A cross-link (tryptophyl-tyrosyl-methioninium (Trp-Tyr) (with M-240)) is located at residues 91-214 (WHAAGTYRIG…LAAVQMGLIY (124 aa)). H92 serves as the catalytic Proton acceptor. The tryptophyl-tyrosyl-methioninium (Tyr-Met) (with W-91) cross-link spans 214–240 (YVNPEGPNGNPDPVAAAIDIRETFRRM). H255 is a heme b binding site. The segment at 335–362 (AHQWKPKGNAGAGTVPDPADPSKRRSPS) is disordered.

This sequence belongs to the peroxidase family. Peroxidase/catalase subfamily. Homodimer or homotetramer. The cofactor is heme b. Formation of the three residue Trp-Tyr-Met cross-link is important for the catalase, but not the peroxidase activity of the enzyme.

The enzyme catalyses H2O2 + AH2 = A + 2 H2O. It carries out the reaction 2 H2O2 = O2 + 2 H2O. Functionally, bifunctional enzyme with both catalase and broad-spectrum peroxidase activity. This is Catalase-peroxidase from Cupriavidus metallidurans (strain ATCC 43123 / DSM 2839 / NBRC 102507 / CH34) (Ralstonia metallidurans).